The sequence spans 478 residues: Dynein regulatory complex subunit 4 (478 aa).

Basic residues predominate over residues 1 to 12; sequence MAPKKKGKKGKA. The disordered stretch occupies residues 1–29; that stretch reads MAPKKKGKKGKAKGTAIVDGVAPEDMTKE. The interval 1-114 is regulates microtubule-binding; the sequence is MAPKKKGKKG…LLYEHQNNLA (114 aa). Coiled coils occupy residues 24–207 and 242–426; these read EDMT…RKTE and LNNL…ELAR. A microtubule-binding region spans residues 115–258; the sequence is EVKAEGTVVM…NSLKEQMEDM (144 aa). Residues 357–478 are interaction with SMO; the sequence is QQKTGFKNLL…GPAGLVGAPT (122 aa).

This sequence belongs to the DRC4 family. As to quaternary structure, component of the nexin-dynein regulatory complex (N-DRC). Interacts with microtubules. Interacts with SMO. Interacts (via coiled-coil domains) with RAB3B (in GTP-bound form). Interacts with DRC1. Interacts with DRC7. In terms of tissue distribution, highly expressed in adult testes and lung. Weakly or not expressed in other tested tissues.

It is found in the cytoplasm. The protein localises to the cytoskeleton. Its subcellular location is the cell projection. The protein resides in the cilium. It localises to the flagellum. It is found in the cilium axoneme. The protein localises to the cilium basal body. Its subcellular location is the golgi apparatus. The protein resides in the flagellum axoneme. Component of the nexin-dynein regulatory complex (N-DRC), a key regulator of ciliary/flagellar motility which maintains the alignment and integrity of the distal axoneme and regulates microtubule sliding in motile axonemes. Plays an important role in the assembly of the N-DRC linker. Plays dual roles at both the primary (or non-motile) cilia to regulate hedgehog signaling and in motile cilia to coordinate cilia movement. Required for proper motile cilia functioning. Positively regulates ciliary smoothened (SMO)-dependent Hedgehog (Hh) signaling pathway by facilitating the trafficking of SMO into the cilium and the stimulation of SMO activity in a GRK2-dependent manner. May play a role in the spermatozoa motility. This is Dynein regulatory complex subunit 4 (Gas8) from Mus musculus (Mouse).